The chain runs to 180 residues: Pro-glucagon (180 aa).

A signal peptide spans 1-20 (MKTIYFVAGLFVMLVQGSWQ). Positions 25–59 (NTEEKSRSFPAPQTDPLDDPDQMTEDKRHSQGTFT) are disordered. Serine 54 bears the Phosphoserine mark. The propeptide occupies 84-89 (NKNNIA). Serine 105 and serine 108 each carry phosphoserine. The residue at position 127 (arginine 127) is an Arginine amide. Residues 131 to 145 (DFPEEVTIVEELRRR) constitute a propeptide that is removed on maturation. Residues serine 150 and serine 152 each carry the phosphoserine modification.

Belongs to the glucagon family. Post-translationally, proglucagon is post-translationally processed in a tissue-specific manner in pancreatic A cells and intestinal L cells. In pancreatic A cells, the major bioactive hormone is glucagon cleaved by PCSK2/PC2. In the intestinal L cells PCSK1/PC1 liberates GLP-1, GLP-2, glicentin and oxyntomodulin. GLP-1 is further N-terminally truncated by post-translational processing in the intestinal L cells resulting in GLP-1(7-37) GLP-1-(7-36)amide. The C-terminal amidation is neither important for the metabolism of GLP-1 nor for its effects on the endocrine pancreas. In terms of tissue distribution, glucagon is secreted in the A cells of the islets of Langerhans. GLP-1, GLP-2, oxyntomodulin and glicentin are secreted from enteroendocrine cells throughout the gastrointestinal tract. GLP-1 and GLP-2 are also secreted in selected neurons in the brain.

It is found in the secreted. Its function is as follows. Plays a key role in glucose metabolism and homeostasis. Regulates blood glucose by increasing gluconeogenesis and decreasing glycolysis. A counterregulatory hormone of insulin, raises plasma glucose levels in response to insulin-induced hypoglycemia. Plays an important role in initiating and maintaining hyperglycemic conditions in diabetes. Potent stimulator of glucose-dependent insulin release. Also stimulates insulin release in response to IL6. Plays important roles on gastric motility and the suppression of plasma glucagon levels. May be involved in the suppression of satiety and stimulation of glucose disposal in peripheral tissues, independent of the actions of insulin. Has growth-promoting activities on intestinal epithelium. May also regulate the hypothalamic pituitary axis (HPA) via effects on LH, TSH, CRH, oxytocin, and vasopressin secretion. Increases islet mass through stimulation of islet neogenesis and pancreatic beta cell proliferation. Inhibits beta cell apoptosis. Functionally, stimulates intestinal growth and up-regulates villus height in the small intestine, concomitant with increased crypt cell proliferation and decreased enterocyte apoptosis. The gastrointestinal tract, from the stomach to the colon is the principal target for GLP-2 action. Plays a key role in nutrient homeostasis, enhancing nutrient assimilation through enhanced gastrointestinal function, as well as increasing nutrient disposal. Stimulates intestinal glucose transport and decreases mucosal permeability. In terms of biological role, significantly reduces food intake. Inhibits gastric emptying in humans. Suppression of gastric emptying may lead to increased gastric distension, which may contribute to satiety by causing a sensation of fullness. Its function is as follows. May modulate gastric acid secretion and the gastro-pyloro-duodenal activity. May play an important role in intestinal mucosal growth in the early period of life. The polypeptide is Pro-glucagon (GCG) (Sus scrofa (Pig)).